The following is a 213-amino-acid chain: Large ribosomal subunit protein uL4 (213 aa).

A disordered region spans residues 51–90 (TASTLTKAEVRGGGRKPYKQKHTGRARQGSIRNPHYVGGG). Over residues 63 to 75 (GGRKPYKQKHTGR) the composition is skewed to basic residues.

The protein belongs to the universal ribosomal protein uL4 family. In terms of assembly, part of the 50S ribosomal subunit.

In terms of biological role, one of the primary rRNA binding proteins, this protein initially binds near the 5'-end of the 23S rRNA. It is important during the early stages of 50S assembly. It makes multiple contacts with different domains of the 23S rRNA in the assembled 50S subunit and ribosome. Functionally, forms part of the polypeptide exit tunnel. This Malacoplasma penetrans (strain HF-2) (Mycoplasma penetrans) protein is Large ribosomal subunit protein uL4.